A 107-amino-acid chain; its full sequence is IQ domain-containing protein F6 (107 aa).

The 30-residue stretch at 42–71 (QEWAVVKVQAQVRMWQARRRFLQARQAACI) folds into the IQ domain.

In Homo sapiens (Human), this protein is IQ domain-containing protein F6 (IQCF6).